Reading from the N-terminus, the 123-residue chain is Ribosome-binding factor A (123 aa).

Belongs to the RbfA family. As to quaternary structure, monomer. Binds 30S ribosomal subunits, but not 50S ribosomal subunits or 70S ribosomes.

It is found in the cytoplasm. One of several proteins that assist in the late maturation steps of the functional core of the 30S ribosomal subunit. Associates with free 30S ribosomal subunits (but not with 30S subunits that are part of 70S ribosomes or polysomes). Required for efficient processing of 16S rRNA. May interact with the 5'-terminal helix region of 16S rRNA. The chain is Ribosome-binding factor A from Acetivibrio thermocellus (strain ATCC 27405 / DSM 1237 / JCM 9322 / NBRC 103400 / NCIMB 10682 / NRRL B-4536 / VPI 7372) (Clostridium thermocellum).